The following is a 365-amino-acid chain: MESRCKKGYFRLAVIGLSKAKDCWEKNACAVTFIGDGGTSEGDFHAGLNFAAVMEAPVVFICRNNGWAISTHISEQFRSDGIVVKGQAYGIRSIRVDGNDALAVYSAVCSAREMAVTEQRPVLIEMMIYRVGHHSTSDDSTKYRAADEIQYWKMSRNSVNRFRKSVEDNGWWSEEDESKLRSNARKQLLQAIQAAEKWEKQPLTELFNDVYDVKPKNLEEEELGLKELIEKQPQDYMMLKELIPNWILGIGTLALRYDFQETLFNGWHAIAELQQLKLKIKLNSLLNDQADTESLKAARNSALNVIQAMIIHLVLTLKGRFSLPLTEETVRFNEPIQLNQNMVKDGGYTAELFPIRKEEQGEVRR.

It belongs to the ketopantoate reductase family.

It catalyses the reaction (R)-pantoate + NADP(+) = 2-dehydropantoate + NADPH + H(+). It participates in cofactor biosynthesis; (R)-pantothenate biosynthesis; (R)-pantoate from 3-methyl-2-oxobutanoate: step 2/2. Catalyzes the NADPH-dependent reduction of ketopantoate into pantoic acid. This Arabidopsis thaliana (Mouse-ear cress) protein is Putative 2-dehydropantoate 2-reductase (KPR).